The chain runs to 458 residues: MDVILEQLETHTQNKPNDIALHIDDETITYSQLNARITSAVESLQKYSLNPVVAINMKSPVQSIICYLALHRLHKVPMMMEGKWQSTIHRQLIEKYGIKDVIGDTCLMQNIDSPMFIDSTQLQHYPNLLHIGFTSGTTGLPKAYYRDEDSWLASFEVNEMLMLKNENAIAAPGPLSHSLTLYALLFALSSGRTFIGQTTFHPERLLNQCRKISSYKVAMFLVPTMIKSLLLVYNNEHTIQSFFSSGDKLYSSIFKKIKNQANDINLIEFFGTSETSFISYNLNQQAPVESVGVLFPNVELKTTNHDHNGIGTICVKSNMMFSGYVSEQCINNDEWFVTNDNGYVKEQYLYLTGRQHDMLIIGGQNIYPAHVERLLTQSSSIDEAIIIGIPNERFGQIGVLLYSGDVTLTHKNVKQFLNKKVKRYEIPSMIHHVEKMYYTASGKIAREKMMSMYLRGEL.

The protein belongs to the ATP-dependent AMP-binding enzyme family.

The protein is Putative long chain fatty acid-CoA ligase VraA (vraA) of Staphylococcus aureus (strain MRSA252).